Here is a 422-residue protein sequence, read N- to C-terminus: Transcription initiation factor TFIID subunit 15b (422 aa).

4 disordered regions span residues 1 to 24, 47 to 94, 111 to 263, and 368 to 422; these read MAGM…DGYG, YGGR…PNPS, ALAP…DAAT, and MAEK…SRPY. Gly residues-rich tracts occupy residues 8–24 and 47–83; these read DGGG…DGYG and YGGR…GGGG. Residues 84–115 form a RanBP2-type zinc finger; sequence RDGDWRCPNPSCGNVNFARRVECNKCGALAPS. Residues 123–133 are compositionally biased toward gly residues; the sequence is DRGGGGYSRGG. Residues 134 to 156 are compositionally biased toward basic and acidic residues; it reads GDSDRGGGRGGRNDSGRSYESSR. Gly residues-rich tracts occupy residues 219-229 and 236-247; these read PSYGGPRGGYG and GGRGGRSGGYDG. The span at 252–263 shows a compositional bias: basic and acidic residues; sequence RRQEASYEDAAT. The RRM domain occupies 280–371; it reads ARIYISNLPP…NKISVTMAEK (92 aa). Gly residues predominate over residues 382 to 397; the sequence is RGGGRGGGGGGYGGGG.

Belongs to the TAF15 family. In terms of assembly, component of the TFIID complex. TFIID is composed of TATA binding protein (TBP) and a number of TBP-associated factors (TAFs) whose MWs range from 14-217 kDa. Interacts with TAF4, TAF4B, TAF5, TAF12B and TAF14. Expressed in roots, leaves and inflorescences.

It is found in the nucleus. Its function is as follows. TAFs are components of the transcription factor IID (TFIID) complex that is essential for mediating regulation of RNA polymerase transcription. The protein is Transcription initiation factor TFIID subunit 15b (TAF15B) of Arabidopsis thaliana (Mouse-ear cress).